The following is a 234-amino-acid chain: Fibroblast growth factor-binding protein 1 (234 aa).

A signal peptide spans 1 to 23; the sequence is MRTHGLTLLSLLLLAVPMLLVEA. The interval 25 to 59 is disordered; sequence KEGRNRRGSKASADESLALGKPGKEPRSQPTNYPI. 3 cysteine pairs are disulfide-bonded: Cys71–Cys88, Cys97–Cys130, and Cys106–Cys142. Asn155 is a glycosylation site (N-linked (GlcNAc...) asparagine). Residues 169 to 200 form a disordered region; it reads MEPSPMDTVEVTTSSSPEKTQTMATKDPQCEE. The O-linked (GalNAc...) serine glycan is linked to Ser172. A compositionally biased stretch (polar residues) spans 178 to 192; the sequence is EVTTSSSPEKTQTMA. Residues 194-234 are sufficient for interaction with FGF2 and FGF2-induced effects; it reads KDPQCEEEDLKNQRKAALEYCGETWGSLCNFFLSMVQGSSC. Cystine bridges form between Cys198-Cys234 and Cys214-Cys222.

This sequence belongs to the fibroblast growth factor-binding protein family. Found in a complex with FGFBP1, FGF1 and FGF2. Interacts with FGF1, FGF7, FGF10, FGF22 and HSPG2. Interacts with FGF2.

The protein resides in the secreted. The protein localises to the extracellular space. It is found in the cell membrane. Acts as a carrier protein that release fibroblast-binding factors (FGFs) from the extracellular matrix (EM) storage and thus enhance the mitogenic activity of FGFs. Enhances FGF2 signaling during tissue repair, angiogenesis and in tumor growth. This is Fibroblast growth factor-binding protein 1 (FGFBP1) from Bos taurus (Bovine).